We begin with the raw amino-acid sequence, 131 residues long: uncharacterized protein (131 aa).

The CMP/dCMP-type deaminase domain maps to 1 to 116 (MYMARMLSEM…EMLEASSIQC (116 aa)).

This is an uncharacterized protein from Caenorhabditis elegans.